We begin with the raw amino-acid sequence, 267 residues long: Phosphate import ATP-binding protein PstB (267 aa).

In terms of domain architecture, ABC transporter spans 21–262; the sequence is VAARNLDFYY…PSKQQTEDYI (242 aa). 53-60 is an ATP binding site; it reads GPSGCGKS.

It belongs to the ABC transporter superfamily. Phosphate importer (TC 3.A.1.7) family. As to quaternary structure, the complex is composed of two ATP-binding proteins (PstB), two transmembrane proteins (PstC and PstA) and a solute-binding protein (PstS).

It is found in the cell inner membrane. The enzyme catalyses phosphate(out) + ATP + H2O = ADP + 2 phosphate(in) + H(+). Functionally, part of the ABC transporter complex PstSACB involved in phosphate import. Responsible for energy coupling to the transport system. The polypeptide is Phosphate import ATP-binding protein PstB (Xanthomonas euvesicatoria pv. vesicatoria (strain 85-10) (Xanthomonas campestris pv. vesicatoria)).